The chain runs to 426 residues: O-methyltransferase pyvH (426 aa).

Residues 258–259 (GG), D281, 308–309 (DF), and R323 contribute to the S-adenosyl-L-methionine site. Residue H327 is the Proton acceptor of the active site.

The protein belongs to the class I-like SAM-binding methyltransferase superfamily. Cation-independent O-methyltransferase family.

It participates in secondary metabolite biosynthesis. In terms of biological role, O-methyltransferase; part of the gene cluster that mediates the biosynthesis of pyranoviolin A, a pyranonigrin analog with a C-3 methoxy group. Initially, the PKS portion of pyvA synthesizes C-10 carbon chain from 5 molecules of malonyl-CoA, which is then condensed with the thiolation (T) domain-bound glycine activated by the adenylation (A) domain. The subsequent chain release by Dieckmann condensation (DKC) could be catalyzed by the TE domain present at the C-terminus of pyvA and/or the alpha/beta hydrolase pyvD, installing the tetramic acid moiety. The FAD-dependent monooxygenase pyvC next epoxidizes one of the olefins of the polyketide part, and the epoxide ring-opening induces the dihydro-gamma-pyrone ring formation. The cytochrome P450 monooxygeanse pyvB would be responsible for the 2 consecutive reactions, in which the dihydro-gamma-pyrone is oxidized to gamma-pyrone and C-7 is hydroxylated to yield pyranonigrin F. Finally, the O-methyltransferase pyvH methylates the C-3 hydroxy group to complete the biosynthesis. This is O-methyltransferase pyvH from Aspergillus violaceofuscus (strain CBS 115571).